We begin with the raw amino-acid sequence, 437 residues long: 3-deoxy-D-manno-octulosonic acid transferase (437 aa).

The chain crosses the membrane as a helical; Signal-anchor span at residues 16-36 (VVLVCAFVIALPKLLYKMLVY). Glu70 functions as the Proton acceptor in the catalytic mechanism. Residues 279 to 280 (PR), 319 to 321 (IGL), and 346 to 349 (NLLE) contribute to the CMP site.

It belongs to the glycosyltransferase group 1 family. Glycosyltransferase 30 subfamily.

Its subcellular location is the cell inner membrane. The enzyme catalyses lipid IVA (E. coli) + CMP-3-deoxy-beta-D-manno-octulosonate = alpha-Kdo-(2-&gt;6)-lipid IVA (E. coli) + CMP + H(+). It carries out the reaction alpha-Kdo-(2-&gt;6)-lipid IVA (E. coli) + CMP-3-deoxy-beta-D-manno-octulosonate = alpha-Kdo-(2-&gt;4)-alpha-Kdo-(2-&gt;6)-lipid IVA (E. coli) + CMP + H(+). The catalysed reaction is alpha-Kdo-(2-&gt;4)-alpha-Kdo-(2-&gt;6)-lipid IVA (E. coli) + CMP-3-deoxy-beta-D-manno-octulosonate = alpha-Kdo-(2-&gt;8)-alpha-Kdo-(2-&gt;4)-alpha-Kdo-(2-&gt;6)-lipid IVA (E. coli) + CMP + H(+). The protein operates within bacterial outer membrane biogenesis; LPS core biosynthesis. Its function is as follows. Involved in lipopolysaccharide (LPS) biosynthesis. Catalyzes the transfer of three 3-deoxy-D-manno-octulosonate (Kdo) residues from CMP-Kdo to lipid IV(A), the tetraacyldisaccharide-1,4'-bisphosphate precursor of lipid A. Thus generates the genus-specific LPS epitope of Chlamydia, composed of the trisaccharide alpha-Kdo-(2-&gt;8)-alpha-Kdo-(2-&gt;4)-alpha-Kdo. The protein is 3-deoxy-D-manno-octulosonic acid transferase (waaA) of Chlamydia pneumoniae (Chlamydophila pneumoniae).